Reading from the N-terminus, the 271-residue chain is MFSIQQPLLVFSDLDGTLLDSHSYDWQPAAPWLTRLREANVPVILCSSKTSAEMLYLQKTLGLQGLPLIAENGAVIQLAEQWQEIDGFPRIISGISHGEISQVLNTLREKEHFKFTTFDDVDDATITEWTGLSRSQAALTQLHEASVTLIWRDSDERMAQFTARLNELGLQFMQGARFWHVLDASAGKDQAANWIIATYQQLSGKRPTTLGLGDGPNDAPLLEVMDYAVIVKGLNREGVHLHDEDPARVWRTQREGPEGWREGLDHFFSAR.

Residue D13 is the Nucleophile of the active site. Mg(2+) is bound by residues D13, D15, and D214.

Belongs to the HAD-like hydrolase superfamily. MPGP family. The cofactor is Mg(2+).

It is found in the cytoplasm. It catalyses the reaction 2-O-(alpha-D-mannosyl)-3-phosphoglycerate + H2O = (2R)-2-O-(alpha-D-mannosyl)-glycerate + phosphate. This chain is Mannosyl-3-phosphoglycerate phosphatase (yedP), found in Shigella dysenteriae serotype 1 (strain Sd197).